The following is a 640-amino-acid chain: Threonine--tRNA ligase (640 aa).

Positions 1-60 constitute a TGS domain; the sequence is MKITFPDGAVKEFEPGVSTADIAASISPGLKKKALAGKLNGELLDLVTPIHEDGAIEIVT. Residues 241–538 are catalytic; sequence DHRKLGKELE…LIEEYKGAFP (298 aa). 3 residues coordinate Zn(2+): cysteine 334, histidine 385, and histidine 515.

Belongs to the class-II aminoacyl-tRNA synthetase family. As to quaternary structure, homodimer. Zn(2+) serves as cofactor.

Its subcellular location is the cytoplasm. It catalyses the reaction tRNA(Thr) + L-threonine + ATP = L-threonyl-tRNA(Thr) + AMP + diphosphate + H(+). Catalyzes the attachment of threonine to tRNA(Thr) in a two-step reaction: L-threonine is first activated by ATP to form Thr-AMP and then transferred to the acceptor end of tRNA(Thr). Also edits incorrectly charged L-seryl-tRNA(Thr). The polypeptide is Threonine--tRNA ligase (Listeria monocytogenes serovar 1/2a (strain ATCC BAA-679 / EGD-e)).